The following is a 137-amino-acid chain: NADPH-dependent 7-cyano-7-deazaguanine reductase (137 aa).

Catalysis depends on Cys50, which acts as the Thioimide intermediate. Asp57 serves as the catalytic Proton donor. Substrate contacts are provided by residues 72–74 and 91–92; these read VEL and HE.

This sequence belongs to the GTP cyclohydrolase I family. QueF type 1 subfamily.

It localises to the cytoplasm. It carries out the reaction 7-aminomethyl-7-carbaguanine + 2 NADP(+) = 7-cyano-7-deazaguanine + 2 NADPH + 3 H(+). It functions in the pathway tRNA modification; tRNA-queuosine biosynthesis. Functionally, catalyzes the NADPH-dependent reduction of 7-cyano-7-deazaguanine (preQ0) to 7-aminomethyl-7-deazaguanine (preQ1). The chain is NADPH-dependent 7-cyano-7-deazaguanine reductase from Synechococcus sp. (strain CC9902).